Here is a 123-residue protein sequence, read N- to C-terminus: Nitrogenase-stabilizing/protective protein NifW (123 aa).

This sequence belongs to the NifW family. As to quaternary structure, homotrimer; associates with NifD.

May protect the nitrogenase Fe-Mo protein from oxidative damage. In Rhodopseudomonas palustris (strain HaA2), this protein is Nitrogenase-stabilizing/protective protein NifW.